The chain runs to 346 residues: Flap endonuclease 1 (346 aa).

Residues 1 to 102 form an N-domain region; the sequence is MGVTELGKLI…AEIEERRKTR (102 aa). Residues Asp-31, Asp-84, Glu-156, Glu-158, Asp-177, Asp-179, and Asp-239 each contribute to the Mg(2+) site. Residues 120 to 261 are I-domain; that stretch reads DVAKYAKRAV…KALKLIWEFG (142 aa).

This sequence belongs to the XPG/RAD2 endonuclease family. FEN1 subfamily. As to quaternary structure, interacts with PCNA. PCNA stimulates the nuclease activity without altering cleavage specificity. It depends on Mg(2+) as a cofactor.

Functionally, structure-specific nuclease with 5'-flap endonuclease and 5'-3' exonuclease activities involved in DNA replication and repair. During DNA replication, cleaves the 5'-overhanging flap structure that is generated by displacement synthesis when DNA polymerase encounters the 5'-end of a downstream Okazaki fragment. Binds the unpaired 3'-DNA end and kinks the DNA to facilitate 5' cleavage specificity. Cleaves one nucleotide into the double-stranded DNA from the junction in flap DNA, leaving a nick for ligation. Also involved in the base excision repair (BER) pathway. Acts as a genome stabilization factor that prevents flaps from equilibrating into structures that lead to duplications and deletions. Also possesses 5'-3' exonuclease activity on nicked or gapped double-stranded DNA. This chain is Flap endonuclease 1, found in Pyrobaculum aerophilum (strain ATCC 51768 / DSM 7523 / JCM 9630 / CIP 104966 / NBRC 100827 / IM2).